The primary structure comprises 314 residues: Olfactory receptor 9A4 (314 aa).

Residues 1-24 (MLMNYSSATEFYLLGFPGSEELHH) are Extracellular-facing. A glycan (N-linked (GlcNAc...) asparagine) is linked at Asn-4. The chain crosses the membrane as a helical span at residues 25–45 (ILFAIFFFFYLVTLMGNTVII). Topologically, residues 46–53 (MIVCVDKR) are cytoplasmic. Residues 54–74 (LQSPMYFFLGHLSALEILVTT) form a helical membrane-spanning segment. The Extracellular segment spans residues 75 to 99 (IIVPVMLWGLLLPGMQTIYLSACVV). Cysteines 97 and 189 form a disulfide. Residues 100–120 (QLFLYLAVGTTEFALLGAMAV) form a helical membrane-spanning segment. Residues 121–139 (DRYVAVCNPLRYNIIMNRH) are Cytoplasmic-facing. Residues 140–160 (TCNFVVLVSWVFGFLFQIWPV) form a helical membrane-spanning segment. Residues 161-197 (YVMFQLTYCKSNVVNNFFCDRGQLLKLSCNNTLFTEF) lie on the Extracellular side of the membrane. An N-linked (GlcNAc...) asparagine glycan is attached at Asn-190. Residues 198-217 (ILFLMAVFVLFGSLIPTIVS) form a helical membrane-spanning segment. Topologically, residues 218–237 (NAYIISTILKIPSSSGRRKS) are cytoplasmic. Residues 238–258 (FSTCASHFTCVVIGYGSCLFL) traverse the membrane as a helical segment. At 259–271 (YVKPKQTQAADYN) the chain is on the extracellular side. Residues 272 to 292 (WVVSLMVSVVTPFLNPFIFTL) form a helical membrane-spanning segment. Topologically, residues 293-314 (RNDKVIEALRDGVKRCCQLFRN) are cytoplasmic.

The protein belongs to the G-protein coupled receptor 1 family.

It is found in the cell membrane. Functionally, odorant receptor. This chain is Olfactory receptor 9A4 (OR9A4), found in Homo sapiens (Human).